The chain runs to 446 residues: Chromosomal replication initiator protein DnaA (446 aa).

The interval 1–82 (MENILDLWNQ…ELSIKFVIPQ (82 aa)) is domain I, interacts with DnaA modulators. The tract at residues 83–103 (NQDVEDFMPKPQVKKAVKEDT) is domain II. Residues 104-332 (SDFPQNMLNP…VAYSSLINKD (229 aa)) are domain III, AAA+ region. ATP-binding residues include Gly-154, Leu-155, Gly-156, Lys-157, and Thr-158. Thr-158 lines the Mg(2+) pocket. The Initiator specific motif (ISM) motif lies at 182 to 206 (SEKFTNEFINSIRDNKAVDFRNRYR). Residues Asp-214 and Asp-215 each contribute to the Mg(2+) site. Residues 333–346 (INADLAAEALKDII) are linker. Positions 347 to 446 (PSSKPKVITI…HVKEIKEQLK (100 aa)) are domain IV, binds dsDNA.

The protein belongs to the DnaA family. In terms of assembly, the DNA replisome assembles sequentially on oriC in this order; DnaA, DnaD, DnaB, DnaI-DnaC helicase. Oligomerizes as a right-handed, spiral filament on DNA at oriC. Forms an ATP-dependent helix on DNA at oriC; both DnaD and YabA inhibit formation of the DnaA helix. Forms an ATP-dependent oligomer, formation is stimulated by ds- and ssDNA; monomeric ADP-Soj inhibits oligomer formation. Interacts with DnaD. Interacts with YabA, and via YabA, with the replication machinery subunit beta sliding clamp DnaN. Interacts with YabA via domain IIIa (residues 109-275). Isolated domain I forms a 1:1 complex with SirA. Interacts with Soj, probably via domain III. Interacts via domains I and III with CcrZ. Interacts via domain IV with skin prophage-like element protein YqaH.

It localises to the cytoplasm. The protein resides in the nucleoid. It catalyses the reaction ATP + H2O = ADP + phosphate + H(+). Oligomerization of DnaA can be controlled by Soj; monomeric ADP-Soj inhibits formation of the DnaA helix. YabA prevents the cooperative binding of DnaA-ATP to oriC-containing sequences; increased levels of DnaN (beta sliding clamp subunit of DNA polymerase) removes YabA from association with DnaA on the chromosome, enabling increased association of DnaA with its chromosomal binding sites. Both Soj and YabA chase DnaA from oriC site, YabA tethers DnaA to the DNA replication fork via the beta sliding clamp subunit DnaN. SirA antagonizes the ability of DnaA to bind to the replication origin, and thus decreases replication inititation during sporulation. Small protein YqaH, part of the skin prophage-like element, binds to DnaA and antagonizes its replication initiation and transcriptional regulation activities. Plays an essential role in the initiation and regulation of chromosomal replication. ATP-DnaA binds to the origin of replication (oriC) to initiate formation of the DNA replication initiation complex once per cell cycle. Binds directly to oriC at a 9 bp consensus (DnaA box): 5'-TTATCCACA-3' and separates the double-stranded (ds)DNA. Forms a right-handed helical filament on oriC DNA; dsDNA binds to the exterior of the filament while single-stranded (ss)DNA is stabilized in the filament's interior. The ATP-DnaA-oriC complex binds and stabilizes one strand of the AT-rich DNA unwinding element (DUE or basal unwinding system, BUS), permitting loading of DNA polymerase. Binds ATP with high affinity, ADP with lower affinity, but not AMP, cAMP or cGMP; ATP stimulates binding to DnaA boxes. Once bound promotes sequence-specific strand separation of DnaA-trios (3'-GAT-5' consensus) adjacent to oriC in the presence of ATP but not ADP. Domains III and IV are sufficient to separate dsDNA strands. The 'initiator specific motif' (ISM) of domain III contacts the middle adenine residue of the DnaA-trio probably stretching and stabilizing ssDNA. DnaA-trio recognition is co-operative and depends on DnaA self-assembly. The ssDNA serves as an assembly region for the replication machinery. Tethered to DnaN (beta sliding clamp subunit of DNA polymerase) and thus replication forks by YabA. During replication initiation DnaA-ATP binds cooperatively to sequences in oriC. YabA prevents this cooperative binding while still allowing DnaA to bind DNA. During the cell cycle an initial phase occurs in which DnaA is associated with origin regions, then the origin regions become spatially separate from the centrally sequestered DnaA molecules, and most DnaA molecules are unable to reassociate with origin regions. Does not require YabA to bind DNA. During sporulation SirA prevents DnaA association with the replication origin to prevent excessive chromosome replication. Overexpression induces the SOS response; increasing expression of downstream dnaN blocks this induction. Over-initiation of DNA replication is very deleterious; isolated suppressors in relA, ndrR, dnaC, cshA and crrZ increase replication elongation, decrease replication inititation or lead to a decrease in the replicative DNA helicase. Binds acidic phospholipids. Its function is as follows. The half-life of ADP-DnaA is 1.5 minutes, of ATP-DnaA is 5 minutes at 37 degrees Celsius; in E.coli the half-life of ADP-DnaA is about 45 minutes. Functionally, also acts as a transcriptional regulator. DnaA inhibits its own gene expression. DnaA binds specifically to the promoter regions of at least 20 operons (56 genes), including itself, sda and dnaB, and probably controls their expression in response to DNA replication inhibition. This Bacillus subtilis (strain 168) protein is Chromosomal replication initiator protein DnaA.